A 154-amino-acid polypeptide reads, in one-letter code: Nucleoside diphosphate kinase A2 (154 aa).

Residues K13, F61, R89, T95, R106, and N116 each contribute to the ATP site. The Pros-phosphohistidine intermediate role is filled by H119.

The protein belongs to the NDK family. Mg(2+) serves as cofactor.

The protein resides in the cytoplasm. The enzyme catalyses a 2'-deoxyribonucleoside 5'-diphosphate + ATP = a 2'-deoxyribonucleoside 5'-triphosphate + ADP. It catalyses the reaction a ribonucleoside 5'-diphosphate + ATP = a ribonucleoside 5'-triphosphate + ADP. Major role in the synthesis of nucleoside triphosphates other than ATP. The ATP gamma phosphate is transferred to the NDP beta phosphate via a ping-pong mechanism, using a phosphorylated active-site intermediate. The sequence is that of Nucleoside diphosphate kinase A2 from Xenopus laevis (African clawed frog).